A 632-amino-acid chain; its full sequence is Phosphatidylinositol 3,4,5-trisphosphate 3-phosphatase and protein-tyrosine-phosphatase PTEN2B (632 aa).

Over residues 1 to 12 (METDPANSSSKS) the composition is skewed to polar residues. The disordered stretch occupies residues 1–98 (METDPANSSS…RESPPSIFSS (98 aa)). Over residues 39-48 (SAEREAHEDS) the composition is skewed to basic and acidic residues. Residues 63 to 73 (MPASSTGSEPL) show a composition bias toward polar residues. Over residues 87 to 98 (SPRESPPSIFSS) the composition is skewed to low complexity. Positions 189-368 (RRYQEGEFDL…KYYERVQNQF (180 aa)) constitute a Phosphatase tensin-type domain. The active-site Phosphocysteine intermediate is Cys-307. In terms of domain architecture, C2 tensin-type spans 375–502 (ERRCMLRGFR…FHVEIVMIEP (128 aa)). A disordered region spans residues 504–603 (NSQPTKSKSD…SGHYNPIPNN (100 aa)). Residues 505–527 (SQPTKSKSDSTQQQSQSSSSADS) show a composition bias toward low complexity. Positions 535-549 (KDDDVFSDSDGEEEG) are enriched in acidic residues. The residue at position 541 (Ser-541) is a Phosphoserine. The span at 550–571 (NSQSYSTNEKTASSMHTTSKPH) shows a compositional bias: polar residues. Low complexity predominate over residues 584–594 (ANRSVTSSSSS).

It belongs to the PTEN phosphatase protein family. In terms of tissue distribution, expressed, at low levels, in seedlings, roots, stems, leaves, flowers and siliques. However, at protein level, not observed in older leaves, flowers and siliques.

It carries out the reaction O-phospho-L-tyrosyl-[protein] + H2O = L-tyrosyl-[protein] + phosphate. The catalysed reaction is a 1,2-diacyl-sn-glycero-3-phospho-(1D-myo-inositol-3,4,5-trisphosphate) + H2O = a 1,2-diacyl-sn-glycero-3-phospho-(1D-myo-inositol-4,5-bisphosphate) + phosphate. Protein tyrosine phosphatase that also exhibits a weak lipid phosphatase activity towards PtdIns(3)P. This Arabidopsis thaliana (Mouse-ear cress) protein is Phosphatidylinositol 3,4,5-trisphosphate 3-phosphatase and protein-tyrosine-phosphatase PTEN2B.